The following is a 386-amino-acid chain: Bifunctional enzyme IspD/IspF (386 aa).

The 2-C-methyl-D-erythritol 4-phosphate cytidylyltransferase stretch occupies residues methionine 1–valine 226. The tract at residues arginine 227–alanine 386 is 2-C-methyl-D-erythritol 2,4-cyclodiphosphate synthase. 2 residues coordinate a divalent metal cation: aspartate 233 and histidine 235. 4-CDP-2-C-methyl-D-erythritol 2-phosphate is bound by residues aspartate 233–histidine 235 and histidine 259–serine 260. Histidine 267 is a binding site for a divalent metal cation. Residues aspartate 281–glycine 283, threonine 357–glutamate 360, phenylalanine 364, and arginine 367 contribute to the 4-CDP-2-C-methyl-D-erythritol 2-phosphate site.

This sequence in the N-terminal section; belongs to the IspD/TarI cytidylyltransferase family. IspD subfamily. The protein in the C-terminal section; belongs to the IspF family. The cofactor is a divalent metal cation.

It catalyses the reaction 2-C-methyl-D-erythritol 4-phosphate + CTP + H(+) = 4-CDP-2-C-methyl-D-erythritol + diphosphate. The enzyme catalyses 4-CDP-2-C-methyl-D-erythritol 2-phosphate = 2-C-methyl-D-erythritol 2,4-cyclic diphosphate + CMP. It functions in the pathway isoprenoid biosynthesis; isopentenyl diphosphate biosynthesis via DXP pathway; isopentenyl diphosphate from 1-deoxy-D-xylulose 5-phosphate: step 2/6. The protein operates within isoprenoid biosynthesis; isopentenyl diphosphate biosynthesis via DXP pathway; isopentenyl diphosphate from 1-deoxy-D-xylulose 5-phosphate: step 4/6. In terms of biological role, bifunctional enzyme that catalyzes the formation of 4-diphosphocytidyl-2-C-methyl-D-erythritol from CTP and 2-C-methyl-D-erythritol 4-phosphate (MEP) (IspD), and catalyzes the conversion of 4-diphosphocytidyl-2-C-methyl-D-erythritol 2-phosphate (CDP-ME2P) to 2-C-methyl-D-erythritol 2,4-cyclodiphosphate (ME-CPP) with a corresponding release of cytidine 5-monophosphate (CMP) (IspF). In Erythrobacter litoralis (strain HTCC2594), this protein is Bifunctional enzyme IspD/IspF.